Consider the following 242-residue polypeptide: Required for respiratory growth protein 7, mitochondrial (242 aa).

It belongs to the RRG7 family.

The protein resides in the mitochondrion. In Saccharomyces cerevisiae (strain ATCC 204508 / S288c) (Baker's yeast), this protein is Required for respiratory growth protein 7, mitochondrial (RRG7).